The primary structure comprises 200 residues: Small ribosomal subunit protein uS4 (200 aa).

The interval 22 to 43 (TGKELERRPYAPGQHGPTQRKK) is disordered. The S4 RNA-binding domain occupies 92 to 170 (QRLDNIVYRL…VPEYVTFDAE (79 aa)).

It belongs to the universal ribosomal protein uS4 family. As to quaternary structure, part of the 30S ribosomal subunit. Contacts protein S5. The interaction surface between S4 and S5 is involved in control of translational fidelity.

Functionally, one of the primary rRNA binding proteins, it binds directly to 16S rRNA where it nucleates assembly of the body of the 30S subunit. With S5 and S12 plays an important role in translational accuracy. The polypeptide is Small ribosomal subunit protein uS4 (Listeria monocytogenes serotype 4a (strain HCC23)).